Here is a 152-residue protein sequence, read N- to C-terminus: SsrA-binding protein (152 aa).

It belongs to the SmpB family.

The protein resides in the cytoplasm. Functionally, required for rescue of stalled ribosomes mediated by trans-translation. Binds to transfer-messenger RNA (tmRNA), required for stable association of tmRNA with ribosomes. tmRNA and SmpB together mimic tRNA shape, replacing the anticodon stem-loop with SmpB. tmRNA is encoded by the ssrA gene; the 2 termini fold to resemble tRNA(Ala) and it encodes a 'tag peptide', a short internal open reading frame. During trans-translation Ala-aminoacylated tmRNA acts like a tRNA, entering the A-site of stalled ribosomes, displacing the stalled mRNA. The ribosome then switches to translate the ORF on the tmRNA; the nascent peptide is terminated with the 'tag peptide' encoded by the tmRNA and targeted for degradation. The ribosome is freed to recommence translation, which seems to be the essential function of trans-translation. The protein is SsrA-binding protein of Sulfurihydrogenibium sp. (strain YO3AOP1).